The chain runs to 410 residues: DNA replication and repair protein RecF (410 aa).

30–37 (GPNGHGKT) lines the ATP pocket.

Belongs to the RecF family.

Its subcellular location is the cytoplasm. The RecF protein is involved in DNA metabolism; it is required for DNA replication and normal SOS inducibility. RecF binds preferentially to single-stranded, linear DNA. It also seems to bind ATP. The protein is DNA replication and repair protein RecF of Rhodococcus jostii (strain RHA1).